The chain runs to 374 residues: tRNA-specific 2-thiouridylase MnmA (374 aa).

ATP is bound by residues 16 to 23 (GMSGGVDS) and Met-42. The segment at 102 to 104 (NPD) is interaction with target base in tRNA. Cys-107 (nucleophile) is an active-site residue. A disulfide bridge links Cys-107 with Cys-203. Gly-131 provides a ligand contact to ATP. The segment at 153–155 (KDQ) is interaction with tRNA. Cys-203 (cysteine persulfide intermediate) is an active-site residue. Residues 311–312 (RY) form an interaction with tRNA region.

It belongs to the MnmA/TRMU family.

The protein resides in the cytoplasm. It carries out the reaction S-sulfanyl-L-cysteinyl-[protein] + uridine(34) in tRNA + AH2 + ATP = 2-thiouridine(34) in tRNA + L-cysteinyl-[protein] + A + AMP + diphosphate + H(+). Catalyzes the 2-thiolation of uridine at the wobble position (U34) of tRNA, leading to the formation of s(2)U34. The chain is tRNA-specific 2-thiouridylase MnmA from Exiguobacterium sibiricum (strain DSM 17290 / CCUG 55495 / CIP 109462 / JCM 13490 / 255-15).